Here is a 520-residue protein sequence, read N- to C-terminus: Alpha-1B adrenergic receptor (520 aa).

The Extracellular segment spans residues 1–45 (MNPDLDTGHNTSAPAHWGELKNANFTGPNQTSSNSTLPQLDITRA). Asn10, Asn24, Asn29, and Asn34 each carry an N-linked (GlcNAc...) asparagine glycan. The chain crosses the membrane as a helical span at residues 46-70 (ISVGLVLGAFILFAIVGNILVILSV). Topologically, residues 71-83 (ACNRHLRTPTNYF) are cytoplasmic. Residues 84 to 105 (IVNLAMADLLLSFTVLPFSAAL) traverse the membrane as a helical segment. Residues 106–115 (EVLGYWVLGR) are Extracellular-facing. A helical membrane pass occupies residues 116–141 (IFCDIWAAVDVLCCTASILSLCAISI). Cys118 and Cys195 are disulfide-bonded. Over 142–161 (DRYIGVRYSLQYPTLVTRRK) the chain is Cytoplasmic. Residues 162 to 184 (AILALLSVWVLSTVISIGPLLGW) traverse the membrane as a helical segment. Residues 185–201 (KEPAPNDDKECGVTEEP) are Extracellular-facing. Residues 202–224 (FYALFSSLGSFYIPLAVILVMYC) traverse the membrane as a helical segment. The Cytoplasmic portion of the chain corresponds to 225-295 (RVYIVAKRTT…FSREKKAAKT (71 aa)). Thr264 is subject to Phosphothreonine. A helical transmembrane segment spans residues 296 to 319 (LGIVVGMFILCWLPFFIALPLGSL). The Extracellular segment spans residues 320–326 (FSTLKPP). Residues 327–351 (DAVFKVVFWLGYFNSCLNPIIYPCS) form a helical membrane-spanning segment. At 352–520 (SKEFKRAFVR…SNMPLAPGQF (169 aa)) the chain is on the cytoplasmic side. Residue Cys365 is the site of S-palmitoyl cysteine attachment. Positions 368 to 380 (RGRGRRRRRRRRR) match the Nuclear localization signal motif. 2 disordered regions span residues 394 to 432 (GGSLERSQSRKDSLDDSGSCLSGSQRTLPSASPSPGYLG) and 479 to 520 (LTEP…PGQF).

Belongs to the G-protein coupled receptor 1 family. Adrenergic receptor subfamily. ADRA1B sub-subfamily. As to quaternary structure, homo- and heterooligomer. Heterooligomerizes with ADRA1B homooligomers in cardiac myocytes. Interacts with CAVIN4.

The protein resides in the nucleus membrane. It is found in the cell membrane. Its subcellular location is the cytoplasm. The protein localises to the membrane. It localises to the caveola. This alpha-adrenergic receptor mediates its action by association with G proteins that activate a phosphatidylinositol-calcium second messenger system. Its effect is mediated by G(q) and G(11) proteins. Nuclear ADRA1A-ADRA1B heterooligomers regulate phenylephrine (PE)-stimulated ERK signaling in cardiac myocytes. This chain is Alpha-1B adrenergic receptor (ADRA1B), found in Homo sapiens (Human).